The chain runs to 119 residues: UPF0102 protein CGSHiGG_01960 (119 aa).

Belongs to the UPF0102 family.

The polypeptide is UPF0102 protein CGSHiGG_01960 (Haemophilus influenzae (strain PittGG)).